A 310-amino-acid chain; its full sequence is Polyprenyl transferase ntnF (310 aa).

A run of 8 helical transmembrane segments spans residues 30-50 (HTPE…FYAI), 63-83 (FLGI…WNDI), 110-130 (AMVA…AMLG), 154-174 (IWAP…PPWV), 185-205 (LPAS…LIYA), 230-250 (ACLT…AFEA), 255-275 (FLWV…ILSL), and 286-306 (IFLV…TDVW).

It belongs to the UbiA prenyltransferase family. Mg(2+) serves as cofactor.

The protein localises to the membrane. It functions in the pathway secondary metabolite biosynthesis; terpenoid biosynthesis. Functionally, olyprenyl transferase; part of the gene cluster that mediates the biosynthesis of the meroterpenoids nectripenoids A and B, as well as cochliquninone D and isocochliquninone E. The pathway probably begins with the HR-PKS ntnH that catalyzes two chain-extension steps to form a reduced triketide, which then primes the SAT domain in the NR-PKS ntnG to initiate three more cycles of extension to give a linear hexaketide corresponding to the polyketide part of nectripenoids. The FAD-dependent monooxygenase ntnJ then performs an oxidative decarboxylation at C11 of the ntnH/ntnG product, via an electrophilic aromatic hydroxylation with concomitant ipso-decarboxylation. The membrane-bound polyprenyl transferase ntnF then introduces a farnesyl group before the FAD-dependent monooxygenase ntnK functions as the first epoxidase on terminal C12'-C13' olefin, followed by a second epoxidation on C7'-C8' catalyzed by ntnA. The terpene cyclase/mutase ntnI then initiates the sequential tricyclic ring formation through protonation of the terminal epoxide and catalyzes the regioselective and stereoselective 6/6/6-tricyclic ring formation. The cytochrome P450 monooxygenase ntnM may then hydroxylate C1'. This is Polyprenyl transferase ntnF from Nectria sp.